The sequence spans 35 residues: UPF0387 membrane protein YohO (35 aa).

A helical membrane pass occupies residues 6–26; sequence IGVIALFLLMAIGGIGGVMLA.

This sequence belongs to the UPF0387 family.

It is found in the cell inner membrane. The chain is UPF0387 membrane protein YohO from Salmonella paratyphi A (strain ATCC 9150 / SARB42).